The following is a 423-amino-acid chain: Tyrosine--tRNA ligase (423 aa).

Tyr-35 serves as a coordination point for L-tyrosine. A 'HIGH' region motif is present at residues 40–49 (PTAASLHVGH). 2 residues coordinate L-tyrosine: Tyr-170 and Gln-174. Positions 231–235 (KFGKS) match the 'KMSKS' region motif. An ATP-binding site is contributed by Lys-234. Positions 353 to 419 (GPLVDLLVEV…GKKNLAAVEV (67 aa)) constitute an S4 RNA-binding domain.

This sequence belongs to the class-I aminoacyl-tRNA synthetase family. TyrS type 1 subfamily. In terms of assembly, homodimer.

Its subcellular location is the cytoplasm. It carries out the reaction tRNA(Tyr) + L-tyrosine + ATP = L-tyrosyl-tRNA(Tyr) + AMP + diphosphate + H(+). Catalyzes the attachment of tyrosine to tRNA(Tyr) in a two-step reaction: tyrosine is first activated by ATP to form Tyr-AMP and then transferred to the acceptor end of tRNA(Tyr). The protein is Tyrosine--tRNA ligase of Streptomyces griseus subsp. griseus (strain JCM 4626 / CBS 651.72 / NBRC 13350 / KCC S-0626 / ISP 5235).